The chain runs to 400 residues: Probable peptidoglycan D,D-transpeptidase PenA (400 aa).

The disordered stretch occupies residues 1–21 (NIDGKGQEGLELSREDSLRGE). The active-site Acyl-ester intermediate is Ser128.

Belongs to the transpeptidase family. FtsI subfamily.

The protein localises to the cell inner membrane. It carries out the reaction Preferential cleavage: (Ac)2-L-Lys-D-Ala-|-D-Ala. Also transpeptidation of peptidyl-alanyl moieties that are N-acyl substituents of D-alanine.. Its pathway is cell wall biogenesis; peptidoglycan biosynthesis. In terms of biological role, catalyzes cross-linking of the peptidoglycan cell wall at the division septum. The sequence is that of Probable peptidoglycan D,D-transpeptidase PenA from Neisseria flavescens.